Consider the following 199-residue polypeptide: Protein GrpE (199 aa).

Residues 20–52 (YKVENEILEEETDEESQHQEPALGHPSYTALEE) form a disordered region.

This sequence belongs to the GrpE family. As to quaternary structure, homodimer.

The protein localises to the cytoplasm. Its function is as follows. Participates actively in the response to hyperosmotic and heat shock by preventing the aggregation of stress-denatured proteins, in association with DnaK and GrpE. It is the nucleotide exchange factor for DnaK and may function as a thermosensor. Unfolded proteins bind initially to DnaJ; upon interaction with the DnaJ-bound protein, DnaK hydrolyzes its bound ATP, resulting in the formation of a stable complex. GrpE releases ADP from DnaK; ATP binding to DnaK triggers the release of the substrate protein, thus completing the reaction cycle. Several rounds of ATP-dependent interactions between DnaJ, DnaK and GrpE are required for fully efficient folding. The protein is Protein GrpE of Legionella pneumophila (strain Corby).